The primary structure comprises 510 residues: GMP synthase [glutamine-hydrolyzing] (510 aa).

A Glutamine amidotransferase type-1 domain is found at 5 to 195; that stretch reads KILVLDFGGQ…LFKVCGVKGT (191 aa). Residue Cys-82 is the Nucleophile of the active site. Residues His-169 and Glu-171 contribute to the active site. In terms of domain architecture, GMPS ATP-PPase spans 196 to 385; the sequence is WNMADFINEE…LGLPDEIVWR (190 aa). Residue 223 to 229 participates in ATP binding; sequence SGGVDSA.

In terms of assembly, homodimer.

It carries out the reaction XMP + L-glutamine + ATP + H2O = GMP + L-glutamate + AMP + diphosphate + 2 H(+). It functions in the pathway purine metabolism; GMP biosynthesis; GMP from XMP (L-Gln route): step 1/1. In terms of biological role, catalyzes the synthesis of GMP from XMP. The polypeptide is GMP synthase [glutamine-hydrolyzing] (Halothermothrix orenii (strain H 168 / OCM 544 / DSM 9562)).